Consider the following 180-residue polypeptide: Acireductone dioxygenase (180 aa).

Fe(2+) is bound by residues His88, His90, Glu94, and His133. 4 residues coordinate Ni(2+): His88, His90, Glu94, and His133.

This sequence belongs to the acireductone dioxygenase (ARD) family. Monomer. Interacts with MMP14. It depends on Fe(2+) as a cofactor. Ni(2+) is required as a cofactor.

The protein resides in the cytoplasm. The protein localises to the nucleus. Its subcellular location is the cell membrane. The enzyme catalyses 1,2-dihydroxy-5-(methylsulfanyl)pent-1-en-3-one + O2 = 4-methylsulfanyl-2-oxobutanoate + formate + 2 H(+). It catalyses the reaction 1,2-dihydroxy-5-(methylsulfanyl)pent-1-en-3-one + O2 = 3-(methylsulfanyl)propanoate + CO + formate + 2 H(+). Its pathway is amino-acid biosynthesis; L-methionine biosynthesis via salvage pathway; L-methionine from S-methyl-5-thio-alpha-D-ribose 1-phosphate: step 5/6. Catalyzes 2 different reactions between oxygen and the acireductone 1,2-dihydroxy-3-keto-5-methylthiopentene (DHK-MTPene) depending upon the metal bound in the active site. Fe-containing acireductone dioxygenase (Fe-ARD) produces formate and 2-keto-4-methylthiobutyrate (KMTB), the alpha-ketoacid precursor of methionine in the methionine recycle pathway. Ni-containing acireductone dioxygenase (Ni-ARD) produces methylthiopropionate, carbon monoxide and formate, and does not lie on the methionine recycle pathway. In Gallus gallus (Chicken), this protein is Acireductone dioxygenase.